The chain runs to 452 residues: Probable alpha-galactosidase B (452 aa).

The N-terminal stretch at 1-24 (MLHRATTTAAAAAAAALLLCPVQA) is a signal peptide. Residues cysteine 47 and cysteine 79 are joined by a disulfide bond. N-linked (GlcNAc...) asparagine glycans are attached at residues asparagine 87 and asparagine 138. Cysteine 129 and cysteine 159 are joined by a disulfide. Residue aspartate 157 is the Nucleophile of the active site. Residue asparagine 184 is glycosylated (N-linked (GlcNAc...) asparagine). 231 to 235 (DWGQA) is a binding site for substrate. Aspartate 253 acts as the Proton donor in catalysis. 4 N-linked (GlcNAc...) asparagine glycosylation sites follow: asparagine 292, asparagine 391, asparagine 409, and asparagine 410.

This sequence belongs to the glycosyl hydrolase 27 family.

The protein resides in the secreted. The enzyme catalyses Hydrolysis of terminal, non-reducing alpha-D-galactose residues in alpha-D-galactosides, including galactose oligosaccharides, galactomannans and galactolipids.. Its function is as follows. Hydrolyzes a variety of simple alpha-D-galactoside as well as more complex molecules such as oligosaccharides and polysaccharides. The chain is Probable alpha-galactosidase B from Talaromyces emersonii (Thermophilic fungus).